The chain runs to 254 residues: Peptide methionine sulfoxide reductase A5 (254 aa).

An N-terminal signal peptide occupies residues 1–26 (MARGSAAAAIAGVVWVLLLLVGVASG).

Belongs to the MsrA Met sulfoxide reductase family.

The catalysed reaction is L-methionyl-[protein] + [thioredoxin]-disulfide + H2O = L-methionyl-(S)-S-oxide-[protein] + [thioredoxin]-dithiol. The enzyme catalyses [thioredoxin]-disulfide + L-methionine + H2O = L-methionine (S)-S-oxide + [thioredoxin]-dithiol. Its function is as follows. Catalyzes the reduction of methionine sulfoxide (MetSO) to methionine in proteins. Plays a protective role against oxidative stress by restoring activity to proteins that have been inactivated by methionine oxidation. MSRA family specifically reduces the MetSO S-enantiomer. This is Peptide methionine sulfoxide reductase A5 (MSRA5) from Oryza sativa subsp. japonica (Rice).